The primary structure comprises 218 residues: Small ribosomal subunit protein uS3c (218 aa).

The region spanning 47-118 (VYKNIRNSSN…KLRMTLTEVT (72 aa)) is the KH type-2 domain.

The protein belongs to the universal ribosomal protein uS3 family. In terms of assembly, part of the 30S ribosomal subunit.

It is found in the plastid. It localises to the chloroplast. This Physcomitrium patens (Spreading-leaved earth moss) protein is Small ribosomal subunit protein uS3c (rps3).